Here is a 59-residue protein sequence, read N- to C-terminus: Large ribosomal subunit protein uL30 (59 aa).

This sequence belongs to the universal ribosomal protein uL30 family. Part of the 50S ribosomal subunit.

The sequence is that of Large ribosomal subunit protein uL30 from Geobacter sulfurreducens (strain ATCC 51573 / DSM 12127 / PCA).